A 550-amino-acid polypeptide reads, in one-letter code: Glucose-6-phosphate isomerase (550 aa).

E356 (proton donor) is an active-site residue. Catalysis depends on residues H387 and K515.

This sequence belongs to the GPI family.

It localises to the cytoplasm. It catalyses the reaction alpha-D-glucose 6-phosphate = beta-D-fructose 6-phosphate. The protein operates within carbohydrate biosynthesis; gluconeogenesis. Its pathway is carbohydrate degradation; glycolysis; D-glyceraldehyde 3-phosphate and glycerone phosphate from D-glucose: step 2/4. In terms of biological role, catalyzes the reversible isomerization of glucose-6-phosphate to fructose-6-phosphate. The chain is Glucose-6-phosphate isomerase from Syntrophobacter fumaroxidans (strain DSM 10017 / MPOB).